Reading from the N-terminus, the 445-residue chain is Tubulin beta-2 chain (445 aa).

The short motif at 1-4 (MREI) is the MREI motif element. Glutamine 11, glutamate 69, serine 138, glycine 142, threonine 143, glycine 144, asparagine 204, and asparagine 226 together coordinate GTP. Glutamate 69 lines the Mg(2+) pocket. The disordered stretch occupies residues 424–445 (QYQDATADEQGEFEEEGEEDEA). Over residues 429–445 (TADEQGEFEEEGEEDEA) the composition is skewed to acidic residues. Glutamate 438 carries the 5-glutamyl polyglutamate modification.

This sequence belongs to the tubulin family. As to quaternary structure, dimer of alpha and beta chains. A typical microtubule is a hollow water-filled tube with an outer diameter of 25 nm and an inner diameter of 15 nM. Alpha-beta heterodimers associate head-to-tail to form protofilaments running lengthwise along the microtubule wall with the beta-tubulin subunit facing the microtubule plus end conferring a structural polarity. Microtubules usually have 13 protofilaments but different protofilament numbers can be found in some organisms and specialized cells. Mg(2+) serves as cofactor. Some glutamate residues at the C-terminus are polyglycylated, resulting in polyglycine chains on the gamma-carboxyl group. Glycylation is mainly limited to tubulin incorporated into axonemes (cilia and flagella) whereas glutamylation is prevalent in neuronal cells, centrioles, axonemes, and the mitotic spindle. Both modifications can coexist on the same protein on adjacent residues, and lowering polyglycylation levels increases polyglutamylation, and reciprocally. The precise function of polyglycylation is still unclear. Post-translationally, some glutamate residues at the C-terminus are polyglutamylated, resulting in polyglutamate chains on the gamma-carboxyl group. Polyglutamylation plays a key role in microtubule severing by spastin (SPAST). SPAST preferentially recognizes and acts on microtubules decorated with short polyglutamate tails: severing activity by SPAST increases as the number of glutamates per tubulin rises from one to eight, but decreases beyond this glutamylation threshold. As to expression, highly expressed in neuronal cells.

The protein resides in the cytoplasm. Its subcellular location is the cytoskeleton. Tubulin is the major constituent of microtubules, a cylinder consisting of laterally associated linear protofilaments composed of alpha- and beta-tubulin heterodimers. Microtubules grow by the addition of GTP-tubulin dimers to the microtubule end, where a stabilizing cap forms. Below the cap, tubulin dimers are in GDP-bound state, owing to GTPase activity of alpha-tubulin. This Gallus gallus (Chicken) protein is Tubulin beta-2 chain.